A 242-amino-acid chain; its full sequence is 1-(5-phosphoribosyl)-5-[(5-phosphoribosylamino)methylideneamino] imidazole-4-carboxamide isomerase (242 aa).

Asp-7 (proton acceptor) is an active-site residue. Asp-129 (proton donor) is an active-site residue.

It belongs to the HisA/HisF family.

Its subcellular location is the cytoplasm. It carries out the reaction 1-(5-phospho-beta-D-ribosyl)-5-[(5-phospho-beta-D-ribosylamino)methylideneamino]imidazole-4-carboxamide = 5-[(5-phospho-1-deoxy-D-ribulos-1-ylimino)methylamino]-1-(5-phospho-beta-D-ribosyl)imidazole-4-carboxamide. Its pathway is amino-acid biosynthesis; L-histidine biosynthesis; L-histidine from 5-phospho-alpha-D-ribose 1-diphosphate: step 4/9. The polypeptide is 1-(5-phosphoribosyl)-5-[(5-phosphoribosylamino)methylideneamino] imidazole-4-carboxamide isomerase (Pseudoalteromonas translucida (strain TAC 125)).